We begin with the raw amino-acid sequence, 429 residues long: Cytochrome bc1 complex Rieske iron-sulfur subunit (429 aa).

A disordered region spans residues methionine 1 to valine 45. The next 3 membrane-spanning stretches (helical) occupy residues valine 96–phenylalanine 116, proline 137–tyrosine 157, and phenylalanine 207–isoleucine 227. The region spanning arginine 316–valine 410 is the Rieske domain. Cysteine 353, histidine 355, cysteine 372, and histidine 375 together coordinate [2Fe-2S] cluster. Residues cysteine 358 and cysteine 374 are joined by a disulfide bond.

It belongs to the Rieske iron-sulfur protein family. As to quaternary structure, the cytochrome bc1 complex is composed of a cytochrome b (QcrB), the Rieske iron-sulfur protein (QcrA) and a diheme cytochrome c (QcrC) subunit. [2Fe-2S] cluster is required as a cofactor.

Its subcellular location is the cell membrane. Iron-sulfur subunit of the cytochrome bc1 complex, an essential component of the respiratory electron transport chain required for ATP synthesis. The bc1 complex catalyzes the oxidation of menaquinol and the reduction of cytochrome c in the respiratory chain. The bc1 complex operates through a Q-cycle mechanism that couples electron transfer to generation of the proton gradient that drives ATP synthesis. The polypeptide is Cytochrome bc1 complex Rieske iron-sulfur subunit (qcrA) (Mycobacterium tuberculosis (strain CDC 1551 / Oshkosh)).